The chain runs to 343 residues: Heat-inducible transcription repressor HrcA (343 aa).

Belongs to the HrcA family.

Functionally, negative regulator of class I heat shock genes (grpE-dnaK-dnaJ and groELS operons). Prevents heat-shock induction of these operons. The chain is Heat-inducible transcription repressor HrcA from Lysinibacillus sphaericus (Bacillus sphaericus).